Here is a 206-residue protein sequence, read N- to C-terminus: Heterochromatin protein 1 (206 aa).

Disordered stretches follow at residues 1 to 24 (MGKKIDNPESSAKVSDAEEEEEEY) and 47 to 145 (GYPE…GFDR). Phosphoserine is present on residues Ser11 and Ser15. Residues 24–82 (YAVEKIIDRRVRKGKVEYYLKWKGYPETENTWEPENNLDCQDLIQQYEASRKDEEKSAA) form the Chromo 1 domain. A compositionally biased stretch (low complexity) spans 50–60 (ETENTWEPENN). A compositionally biased stretch (basic and acidic residues) spans 72 to 98 (ASRKDEEKSAASKKDRPSSSAKAKETQ). The tract at residues 95-206 (KETQGRASSS…RLSWYSDNED (112 aa)) is binds to Su(var)39. Residues Ser102, Ser103, and Ser113 each carry the phosphoserine modification. Phosphothreonine is present on residues Thr127, Thr128, and Thr134. The Chromo 2 domain occupies 147–205 (LEAEKILGASDNNGRLTFLIQFKGVDQAEMVPSSVANEKIPRMVIHFYEERLSWYSDNE).

As to quaternary structure, homodimer. Probably associates with Su(var)3-9. Interacts with Mcm10. Interacts (via chromoshadow domain) with piwi (via N-terminal region). Interacts with Rrp6. Associates with and may be part of the HipHop-HOAP telomere capping complex but is not required for its stability or telomere localization. Interacts (via the chromo domain 2 (chromoshadow domain) and the hinge region between chromo domains 1 and 2) with cav/HOAP (via C-terminus); the interaction is direct. Each molecule of cav/HOAP interacts with 2 molecules of Su(var)205/HP1. Interacts with HipHop (via N-terminus). Interacts with moi/modigliani; the interaction is direct. Interacts (via chromo domain 1) with His3/histone 3 (via N-terminal tail methylated at 'Lys-10'); the interaction is direct. Salivary gland (at protein level).

The protein localises to the nucleus. It is found in the nucleoplasm. The protein resides in the chromosome. Its subcellular location is the telomere. Its function is as follows. Structural component of heterochromatin, involved in gene repression and the modification of position-effect-variegation. Recognizes and binds histone H3 tails methylated at 'Lys-9', leading to epigenetic repression. Stabilizes chromatin-associated RNAs probably by binding to them and thereby preventing their degradation. Associates with, and may be a part of, the HipHop-HOAP complex that recruits the MTV complex to form the terminin telomere-capping complex, which binds to chromosome ends in a sequence-independent manner and prevents telomere fusion. Telomere capping is independent of the origin recognition complex (ORC). This chain is Heterochromatin protein 1, found in Drosophila melanogaster (Fruit fly).